The chain runs to 288 residues: Small ribosomal subunit protein uS3 (288 aa).

In terms of domain architecture, KH type-2 spans 38–106 (IRRMMSKGLE…QVQLNIIEVK (69 aa)). A disordered region spans residues 209–288 (PGRETPAEAP…TQPAETQQEG (80 aa)). A compositionally biased stretch (basic and acidic residues) spans 219–232 (SRPRRERGDRSERP). Positions 249 to 264 (AGRAAATTIAQAAETP) are enriched in low complexity. Over residues 277–288 (AATQPAETQQEG) the composition is skewed to polar residues.

It belongs to the universal ribosomal protein uS3 family. Part of the 30S ribosomal subunit. Forms a tight complex with proteins S10 and S14.

In terms of biological role, binds the lower part of the 30S subunit head. Binds mRNA in the 70S ribosome, positioning it for translation. This chain is Small ribosomal subunit protein uS3, found in Salinispora arenicola (strain CNS-205).